The chain runs to 440 residues: Ribosomal protein uS12 methylthiotransferase RimO (440 aa).

Positions 5 to 115 constitute an MTTase N-terminal domain; it reads PTVGFVSLGC…VVNAVHEVVP (111 aa). [4Fe-4S] cluster is bound by residues Cys-14, Cys-50, Cys-79, Cys-148, Cys-152, and Cys-155. The region spanning 134-372 is the Radical SAM core domain; sequence LTPRHYAYLK…MAHQQAISAA (239 aa). In terms of domain architecture, TRAM spans 375–440; sequence QLKVGKELDV…DEYDLWAEVI (66 aa).

Belongs to the methylthiotransferase family. RimO subfamily. It depends on [4Fe-4S] cluster as a cofactor.

Its subcellular location is the cytoplasm. The enzyme catalyses L-aspartate(89)-[ribosomal protein uS12]-hydrogen + (sulfur carrier)-SH + AH2 + 2 S-adenosyl-L-methionine = 3-methylsulfanyl-L-aspartate(89)-[ribosomal protein uS12]-hydrogen + (sulfur carrier)-H + 5'-deoxyadenosine + L-methionine + A + S-adenosyl-L-homocysteine + 2 H(+). In terms of biological role, catalyzes the methylthiolation of an aspartic acid residue of ribosomal protein uS12. This Stutzerimonas stutzeri (strain A1501) (Pseudomonas stutzeri) protein is Ribosomal protein uS12 methylthiotransferase RimO.